Consider the following 507-residue polypeptide: Heat shock 70 kDa protein 14-B (507 aa).

The protein belongs to the heat shock protein 70 family. Component of ribosome-associated complex (RAC).

It is found in the cytoplasm. The protein resides in the cytosol. In terms of biological role, component of the ribosome-associated complex (RAC), a complex involved in folding or maintaining nascent polypeptides in a folding-competent state. The polypeptide is Heat shock 70 kDa protein 14-B (hspa14-b) (Xenopus laevis (African clawed frog)).